A 78-amino-acid chain; its full sequence is MEQAPEDQGPQRKPHNEWTLELLEELKNEAVRHFPRIWLHGLGQHIYETYGDTWAGVEAIIRILQQLLFIHFQNWVST.

The interval 1–42 (MEQAPEDQGPQRKPHNEWTLELLEELKNEAVRHFPRIWLHGL) is homooligomerization.

The protein belongs to the HIV-1 VPR protein family. As to quaternary structure, homooligomer, may form homodimer. Interacts with p6-gag region of the Pr55 Gag precursor protein through a (Leu-X-X)4 motif near the C-terminus of the P6gag protein. Interacts with host UNG. May interact with host RAD23A/HHR23A. Interacts with host VPRBP/DCAF1, leading to hijack the CUL4A-RBX1-DDB1-DCAF1/VPRBP complex, mediating ubiquitination of host proteins such as TERT and ZGPAT and arrest of the cell cycle in G2 phase. In terms of processing, phosphorylated on several residues by host. These phosphorylations regulate VPR activity for the nuclear import of the HIV-1 pre-integration complex.

It localises to the virion. The protein localises to the host nucleus. Its subcellular location is the host extracellular space. During virus replication, may deplete host UNG protein, and incude G2-M cell cycle arrest. Acts by targeting specific host proteins for degradation by the 26S proteasome, through association with the cellular CUL4A-DDB1 E3 ligase complex by direct interaction with host VPRPB/DCAF-1. Cell cycle arrest reportedly occurs within hours of infection and is not blocked by antiviral agents, suggesting that it is initiated by the VPR carried into the virion. Additionally, VPR induces apoptosis in a cell cycle dependent manner suggesting that these two effects are mechanistically linked. Detected in the serum and cerebrospinal fluid of AIDS patient, VPR may also induce cell death to bystander cells. In terms of biological role, during virus entry, plays a role in the transport of the viral pre-integration (PIC) complex to the host nucleus. This function is crucial for viral infection of non-dividing macrophages. May act directly at the nuclear pore complex, by binding nucleoporins phenylalanine-glycine (FG)-repeat regions. This Homo sapiens (Human) protein is Protein Vpr.